We begin with the raw amino-acid sequence, 565 residues long: Wee1-like protein kinase 2 (565 aa).

Disordered regions lie at residues 18 to 78 (YCEE…KSPE) and 169 to 191 (KSNGKRKTRGDFEEAGPGEGNVE). Over residues 19 to 29 (CEEESESEGQE) the composition is skewed to acidic residues. The span at 31–51 (WETRDAHSQIPDRAEGQESEA) shows a compositional bias: basic and acidic residues. S76 carries the post-translational modification Phosphoserine. Positions 173–175 (KRK) match the Nuclear localization signal motif. The 279-residue stretch at 214 to 492 (FLEVEKIGVG…ARSRVLRPSL (279 aa)) folds into the Protein kinase domain. Residues 220 to 228 (IGVGEFGTV) and K243 each bind ATP. The short motif at 317 to 331 (KLKDILLQISLGLKY) is the Nuclear export signal element. D341 functions as the Proton acceptor in the catalytic mechanism. Mg(2+)-binding residues include N346 and D382. Positions 495-521 (AEELQQQLNLEKFKTATLERELREAQQ) form a coiled coil. The disordered stretch occupies residues 521–565 (QAWFSQEERGDAGVSGTPTGSRSTKRLVGGKSAKSSSFTWGKSSP). A compositionally biased stretch (polar residues) spans 553–565 (AKSSSFTWGKSSP).

This sequence belongs to the protein kinase superfamily. Ser/Thr protein kinase family. WEE1 subfamily. Post-translationally, phosphorylation leads to increase its activity.

Its subcellular location is the nucleus. It carries out the reaction L-tyrosyl-[protein] + ATP = O-phospho-L-tyrosyl-[protein] + ADP + H(+). Its function is as follows. Oocyte-specific protein tyrosine kinase that phosphorylates and inhibits CDK1 and acts as a key regulator of meiosis during both prophase I and metaphase II. Required to maintain meiotic arrest in oocytes during the germinal vesicle (GV) stage, a long period of quiescence at dictyate prophase I, by phosphorylating CDK1 at 'Tyr-15', leading to inhibit CDK1 activity and prevent meiotic reentry. Also required for metaphase II exit during egg activation by phosphorylating CDK1 at 'Tyr-15', to ensure exit from meiosis in oocytes and promote pronuclear formation. This is Wee1-like protein kinase 2 (WEE2) from Ailuropoda melanoleuca (Giant panda).